The following is a 484-amino-acid chain: Arachin Ahy-3 (484 aa).

Positions 1-20 are cleaved as a signal peptide; sequence MAKLLALSVCFCFLVLGASS. 2 disulfides stabilise this stretch: Cys-32-Cys-65 and Cys-108-Cys-305. The region spanning 35 to 253 is the Cupin type-1 1 domain; it reads QRLNAQRPDN…GFQVNEDIVR (219 aa). The disordered stretch occupies residues 208-233; that stretch reads QQRSGRQSPKGEEQEQEQENEGGNVF. Residues 295-298 constitute a propeptide that is removed on maturation; sequence DFNN. The region spanning 311–460 is the Cupin type-1 2 domain; sequence MNIGKSTSAD…SYGLQYEQAR (150 aa). A propeptide spanning residues 479-484 is cleaved from the precursor; the sequence is MIRTVA.

It belongs to the 11S seed storage protein (globulins) family. Hexamer; each subunit is composed of an acidic and a basic chain derived from a single precursor and linked by a disulfide bond.

This chain is Arachin Ahy-3, found in Arachis hypogaea (Peanut).